The chain runs to 35 residues: Ranatuerin-2SPa (35 aa).

The cysteines at positions 28 and 33 are disulfide-linked.

In terms of tissue distribution, expressed by the skin glands.

It is found in the secreted. Functionally, antibacterial activity against Gram-positive bacterium S.aureus. Shows no detectable hemolytic activity towards human erythrocytes. This Lithobates septentrionalis (Mink frog) protein is Ranatuerin-2SPa.